Here is a 176-residue protein sequence, read N- to C-terminus: ATP synthase subunit b 2 (176 aa).

A helical membrane pass occupies residues 29–49 (IFWLVITLVIIYMVLSKVALP).

The protein belongs to the ATPase B chain family. F-type ATPases have 2 components, F(1) - the catalytic core - and F(0) - the membrane proton channel. F(1) has five subunits: alpha(3), beta(3), gamma(1), delta(1), epsilon(1). F(0) has three main subunits: a(1), b(2) and c(10-14). The alpha and beta chains form an alternating ring which encloses part of the gamma chain. F(1) is attached to F(0) by a central stalk formed by the gamma and epsilon chains, while a peripheral stalk is formed by the delta and b chains.

The protein resides in the cell inner membrane. F(1)F(0) ATP synthase produces ATP from ADP in the presence of a proton or sodium gradient. F-type ATPases consist of two structural domains, F(1) containing the extramembraneous catalytic core and F(0) containing the membrane proton channel, linked together by a central stalk and a peripheral stalk. During catalysis, ATP synthesis in the catalytic domain of F(1) is coupled via a rotary mechanism of the central stalk subunits to proton translocation. Functionally, component of the F(0) channel, it forms part of the peripheral stalk, linking F(1) to F(0). The b'-subunit is a diverged and duplicated form of b found in plants and photosynthetic bacteria. The polypeptide is ATP synthase subunit b 2 (atpF2) (Roseobacter denitrificans (strain ATCC 33942 / OCh 114) (Erythrobacter sp. (strain OCh 114))).